A 357-amino-acid chain; its full sequence is Cyclin-dependent kinase-like 1 (357 aa).

A Protein kinase domain is found at 4–287; sequence YEKIGKIGEG…CEQLLHHPYF (284 aa). ATP contacts are provided by residues 10–18 and Lys33; that span reads IGEGSYGVV. Residues 45–51 carry the [NKR]KIAxRE motif; it reads KKIALRE. Residue Asp126 is the Proton acceptor of the active site.

Belongs to the protein kinase superfamily. CMGC Ser/Thr protein kinase family. CDC2/CDKX subfamily. In terms of tissue distribution, highly expressed in kidney, and to a lower extent in ovary.

It is found in the cytoplasm. The protein localises to the nucleus. It carries out the reaction L-seryl-[protein] + ATP = O-phospho-L-seryl-[protein] + ADP + H(+). It catalyses the reaction L-threonyl-[protein] + ATP = O-phospho-L-threonyl-[protein] + ADP + H(+). This is Cyclin-dependent kinase-like 1 from Homo sapiens (Human).